We begin with the raw amino-acid sequence, 286 residues long: Plasma membrane ascorbate-dependent reductase CYBRD1 (286 aa).

At 1–7 (MAMEGYR) the chain is on the cytoplasmic side. The helical transmembrane segment at 8-32 (GFLGLLVSALLVGFLSVIFVLIWVL) threads the bilayer. The region spanning 15 to 220 (SALLVGFLSV…FGALIFWIVT (206 aa)) is the Cytochrome b561 domain. The Extracellular portion of the chain corresponds to 33–47 (HFREGLGWDGGALEF). Residues 48 to 69 (NWHPVLAVTGFVFIQGIAIIVY) form a helical membrane-spanning segment. The heme b site is built by His-50, Arg-70, and Lys-79. Residues 70-78 (RLPWTWKCS) lie on the Cytoplasmic side of the membrane. Residues Lys-79 and Lys-83 each contribute to the L-ascorbate site. Residues 79 to 105 (KFLMKSIHAGLNAVAAILAIISVVAVF) traverse the membrane as a helical segment. Residue His-86 coordinates heme b. Residues 106-118 (DYHNVRKIPHMYS) lie on the Extracellular side of the membrane. His-108 is a binding site for Fe(3+). Heme b-binding positions include 115–118 (HMYS) and His-120. A helical membrane pass occupies residues 119–144 (LHSWVGLTVLILYIQQLVVGFFIFLL). Residues 145 to 151 (PWAPPSL) lie on the Cytoplasmic side of the membrane. Arg-152 provides a ligand contact to L-ascorbate. Residues 152 to 179 (RAIVMPIHVYSGLLLFGTVIATVLMGVT) traverse the membrane as a helical segment. 2 residues coordinate heme b: His-159 and Glu-180. The Extracellular segment spans residues 180 to 197 (EKLFFVLKNPSYHSFPPE). A helical membrane pass occupies residues 198–222 (GVFTNTLGLLILVFGALIFWIVTRP). The Cytoplasmic portion of the chain corresponds to 223-286 (QWKRPREPGS…LVDTGQRSTM (64 aa)). Position 225 (Lys-225) interacts with heme b. Ser-232 bears the Phosphoserine mark. Thr-285 carries the phosphothreonine modification.

As to quaternary structure, homodimer. Heme b serves as cofactor. In terms of tissue distribution, highly expressed in all regions of the small intestine and colon studied in suckling animals. However, after weaning, when iron absorption declines significantly, strong expression is retained only in the duodenum. Also expressed in respiratory epithelium.

It is found in the cell membrane. The protein localises to the apical cell membrane. The enzyme catalyses Fe(3+)(out) + L-ascorbate(in) = monodehydro-L-ascorbate radical(in) + Fe(2+)(out) + H(+). It catalyses the reaction Cu(2+)(out) + L-ascorbate(in) = Cu(+)(out) + monodehydro-L-ascorbate radical(in) + H(+). The catalysed reaction is monodehydro-L-ascorbate radical(out) + L-ascorbate(in) = monodehydro-L-ascorbate radical(in) + L-ascorbate(out). In terms of biological role, plasma membrane reductase that uses cytoplasmic ascorbate as an electron donor to reduce extracellular Fe(3+) into Fe(2+). Probably functions in dietary iron absorption at the brush border of duodenal enterocytes by producing Fe(2+), the divalent form of iron that can be transported into enterocytes. It is also able to reduce extracellular monodehydro-L-ascorbate and may be involved in extracellular ascorbate regeneration by erythrocytes in blood. May also act as a ferrireductase in airway epithelial cells. May also function as a cupric transmembrane reductase. This Rattus norvegicus (Rat) protein is Plasma membrane ascorbate-dependent reductase CYBRD1.